The chain runs to 1738 residues: Complement C4-B (1738 aa).

Residues 1-19 (MRLLWGLAWVFSFCASSLQ) form the signal peptide. A disulfide bridge connects residues Cys-66 and Cys-95. An N-linked (GlcNAc...) asparagine glycan is attached at Asn-224. An intrachain disulfide couples Cys-633 to Cys-667. Positions 674–677 (RQKR) are excised as a propeptide. 3 disulfide bridges follow: Cys-700–Cys-726, Cys-701–Cys-733, and Cys-714–Cys-734. One can recognise an Anaphylatoxin-like domain in the interval 700-734 (CCQDGMTKLPMKRTCEQRAARVPQQACREPFLSCC). Asn-743 carries N-linked (GlcNAc...) asparagine glycosylation. Residues 1006-1009 (CAEQ) constitute a cross-link (isoglutamyl cysteine thioester (Cys-Gln)). N-linked (GlcNAc...) asparagine glycans are attached at residues Asn-1324 and Asn-1387. Sulfotyrosine is present on residues Tyr-1413, Tyr-1416, and Tyr-1417. Residues 1444–1447 (RRRR) constitute a propeptide that is removed on maturation. Cystine bridges form between Cys-1465–Cys-1529, Cys-1577–Cys-1582, Cys-1589–Cys-1667, Cys-1612–Cys-1736, and Cys-1712–Cys-1721. The NTR domain maps to 1589–1736 (CPRLLRSLER…FLMEFSSRGC (148 aa)).

In absence of complement activation, circulates in blood as a disulfide-linked trimer of an alpha, beta and gamma chain. In terms of assembly, complement C4b is composed of complement C4b-A, complement C4 beta and complement C4 gamma chains that are associated via disulfide bonds. Non-enzymatic component of the C3 convertase, also named C4bC2b, composed of the serine protease complement C2b (C2), as well as complement C4b. Non-enzymatic component of the C5 convertase, also named C4bC2bC3b, composed of the serine protease complement C2b (C2), complement C3b, as well as complement C4b. Post-translationally, prior to secretion, the single-chain precursor is enzymatically cleaved by plasminogen (PLG) to yield non-identical chains alpha, beta and gamma. During activation of the complement systems, the alpha chain is cleaved into C4a and C4b by different proteases depending on the complement pathway: C4b stays linked to the beta and gamma chains, while C4a is released in the plasma. The alpha chain is cleaved by C1S to generate C4a and C4b following activation by the classical complement system. The alpha chain is cleaved to generate C4a and C4b by MASP2 following activation by the lectin complement system. The alpha chain is cleaved by GZMK to generate C4a and C4b following activation by the GZMK complement system. Further degradation of C4b by C1 into the inactive fragments C4c and C4d blocks the generation of C3 convertase. The proteolytic cleavages often are incomplete so that many structural forms can be found in plasma. In terms of processing, upon activation, the internal thioester bond reacts with carbohydrate antigens on the target surface to form amide or ester bonds, leading to covalent association with the surface of pathogens. Complement C4b interacts with complement C3b via a thioester linkage.

The protein resides in the secreted. Its subcellular location is the cell surface. In terms of biological role, precursor of non-enzymatic components of the classical, lectin and GZMK complement pathways, which consist in a cascade of proteins that leads to phagocytosis and breakdown of pathogens and signaling that strengthens the adaptive immune system. Its function is as follows. Non-enzymatic component of C3 and C5 convertases. Generated following cleavage by complement proteases (C1S, MASP2 or GZMK, depending on the complement pathway), it covalently attaches to the surface of pathogens, where it acts as an opsonin that marks the surface of antigens for removal. It then recruits the serine protease complement C2b to form the C3 and C5 convertases, which cleave and activate C3 and C5, respectively, the next components of the complement pathways. Complement C4b-A isotype is responsible for effective binding to form amide bonds with immune aggregates or protein antigens, while complement C4b-B isotype catalyzes the transacylation of the thioester carbonyl group to form ester bonds with carbohydrate antigens. Putative humoral mediator released following cleavage by complement proteases (C1S, MASP2 or GZMK, depending on the complement pathway). While it is strongly similar to anaphylatoxins, its role is unclear. Was reported to act as a mediator of local inflammatory process; however these effects were probably due to contamination with C3a and/C5a anaphylatoxins in biological assays. In Mus musculus (Mouse), this protein is Complement C4-B.